A 421-amino-acid polypeptide reads, in one-letter code: Aspartokinase (421 aa).

7-10 (KYGG) lines the ATP pocket. Residue 25–30 (RIVATK) coordinates substrate. Ser41 serves as a coordination point for ATP. Substrate is bound by residues 45–49 (DTTDE), Glu74, 125–126 (LD), 151–154 (RGGS), and Ser154. ATP is bound by residues 174–175 (SD), 180–185 (YTADPR), and Lys210. ACT domains lie at 267-343 (VTVL…YDDQ) and 349-421 (LVGA…GTGR). Substrate-binding positions include Asp274, 274–279 (DKPGEA), 292–294 (NID), Gln298, 360–361 (VT), 374–375 (NV), and 381–382 (SE).

It belongs to the aspartokinase family. As to quaternary structure, tetramer consisting of 2 isoforms Alpha (catalytic and regulation) and of a homodimer of 2 isoforms Beta (regulation).

The enzyme catalyses L-aspartate + ATP = 4-phospho-L-aspartate + ADP. It functions in the pathway amino-acid biosynthesis; L-lysine biosynthesis via DAP pathway; (S)-tetrahydrodipicolinate from L-aspartate: step 1/4. Its pathway is amino-acid biosynthesis; L-methionine biosynthesis via de novo pathway; L-homoserine from L-aspartate: step 1/3. It participates in amino-acid biosynthesis; L-threonine biosynthesis; L-threonine from L-aspartate: step 1/5. Catalyzes the phosphorylation of the beta-carboxyl group of aspartic acid with ATP to yield 4-phospho-L-aspartate, which is involved in the branched biosynthetic pathway leading to the biosynthesis of amino acids lysine, threonine, isoleucine and methionine. The sequence is that of Aspartokinase (lysC) from Corynebacterium efficiens (strain DSM 44549 / YS-314 / AJ 12310 / JCM 11189 / NBRC 100395).